A 385-amino-acid polypeptide reads, in one-letter code: tRNA 2-selenouridine synthase (385 aa).

The Rhodanese domain occupies 15-138 (FIADTPLIDV…ARQFLISTID (124 aa)). C98 functions as the S-selanylcysteine intermediate in the catalytic mechanism.

The protein belongs to the SelU family. In terms of assembly, monomer.

It catalyses the reaction 5-methylaminomethyl-2-thiouridine(34) in tRNA + selenophosphate + (2E)-geranyl diphosphate + H2O + H(+) = 5-methylaminomethyl-2-selenouridine(34) in tRNA + (2E)-thiogeraniol + phosphate + diphosphate. The enzyme catalyses 5-methylaminomethyl-2-thiouridine(34) in tRNA + (2E)-geranyl diphosphate = 5-methylaminomethyl-S-(2E)-geranyl-thiouridine(34) in tRNA + diphosphate. The catalysed reaction is 5-methylaminomethyl-S-(2E)-geranyl-thiouridine(34) in tRNA + selenophosphate + H(+) = 5-methylaminomethyl-2-(Se-phospho)selenouridine(34) in tRNA + (2E)-thiogeraniol. It carries out the reaction 5-methylaminomethyl-2-(Se-phospho)selenouridine(34) in tRNA + H2O = 5-methylaminomethyl-2-selenouridine(34) in tRNA + phosphate. Functionally, involved in the post-transcriptional modification of the uridine at the wobble position (U34) of tRNA(Lys), tRNA(Glu) and tRNA(Gln). Catalyzes the conversion of 2-thiouridine (S2U-RNA) to 2-selenouridine (Se2U-RNA). Acts in a two-step process involving geranylation of 2-thiouridine (S2U) to S-geranyl-2-thiouridine (geS2U) and subsequent selenation of the latter derivative to 2-selenouridine (Se2U) in the tRNA chain. The protein is tRNA 2-selenouridine synthase of Nitrosomonas europaea (strain ATCC 19718 / CIP 103999 / KCTC 2705 / NBRC 14298).